The following is a 208-amino-acid chain: Proheparin-binding EGF-like growth factor (208 aa).

A signal peptide spans 1 to 23; sequence MKLLPSVVLKLFLAAVLSALVTG. The propeptide occupies 24 to 62; the sequence is ESLERLRRGLAAATSNPDPPTGTTNQLLPTGADRAQEVQ. Over 24–160 the chain is Extracellular; sequence ESLERLRRGL…ENPLYTYDHT (137 aa). Residues 82-103 are disordered; the sequence is ALATPGKEKNGKKKRKGKGLGK. Residue Thr-85 is glycosylated (O-linked (GalNAc...) threonine). The segment covering 91–102 has biased composition (basic residues); sequence NGKKKRKGKGLG. Residues 104–144 enclose the EGF-like domain; that stretch reads KRDPCLKKYKDYCIHGECRYLKELRIPSCHCLPGYHGQRCH. 3 cysteine pairs are disulfide-bonded: Cys-108/Cys-121, Cys-116/Cys-132, and Cys-134/Cys-143. Residues 149–208 constitute a propeptide, C-terminal; the sequence is PVENPLYTYDHTTVLAVVAVVLSSVCLLVIVGLLMFRYHRRGGYDLESEEKVKLGMASSH. A helical membrane pass occupies residues 161–184; it reads TVLAVVAVVLSSVCLLVIVGLLMF. The Cytoplasmic portion of the chain corresponds to 185–208; it reads RYHRRGGYDLESEEKVKLGMASSH.

In terms of assembly, interacts with FBLN1. Interacts with EGFR and ERBB4. Post-translationally, O-glycosylated. As to expression, most abundant in skeletal muscle, lung, spleen brain and heart.

The protein resides in the secreted. It localises to the extracellular space. The protein localises to the cell membrane. Growth factor that mediates its effects via EGFR, ERBB2 and ERBB4. Required for normal cardiac valve formation and normal heart function. Promotes smooth muscle cell proliferation. May be involved in macrophage-mediated cellular proliferation. It is mitogenic for fibroblasts, but not endothelial cells. It is able to bind EGF receptor/EGFR with higher affinity than EGF itself and is a far more potent mitogen for smooth muscle cells than EGF. Also acts as a diphtheria toxin receptor. The polypeptide is Proheparin-binding EGF-like growth factor (Hbegf) (Rattus norvegicus (Rat)).